The sequence spans 146 residues: Large ribosomal subunit protein uL16 (146 aa).

This sequence belongs to the universal ribosomal protein uL16 family. As to quaternary structure, part of the 50S ribosomal subunit.

In terms of biological role, binds 23S rRNA and is also seen to make contacts with the A and possibly P site tRNAs. This chain is Large ribosomal subunit protein uL16, found in Lactobacillus acidophilus (strain ATCC 700396 / NCK56 / N2 / NCFM).